The sequence spans 462 residues: UDP-N-acetylmuramate--L-alanine ligase (462 aa).

Position 112 to 118 (112 to 118 (GTHGKTT)) interacts with ATP.

It belongs to the MurCDEF family.

It localises to the cytoplasm. It carries out the reaction UDP-N-acetyl-alpha-D-muramate + L-alanine + ATP = UDP-N-acetyl-alpha-D-muramoyl-L-alanine + ADP + phosphate + H(+). The protein operates within cell wall biogenesis; peptidoglycan biosynthesis. Functionally, cell wall formation. This Geobacter sulfurreducens (strain ATCC 51573 / DSM 12127 / PCA) protein is UDP-N-acetylmuramate--L-alanine ligase.